We begin with the raw amino-acid sequence, 305 residues long: MNLRRLKYFVKIVDIGSLTQAAEVLHIAQPALSQQVATLEGEMDQQLLIRTKRGVTPTEAGKILYTHARTILRQCEQAQLAVNNVGQTLRGQVSIGLAPGTAASAITMPLLQTVRNELPEVMVYLQESSGTALNDKLLAGQLDMAVLYERSPVAGIVSQPLLKEDLYLVGTRDCPGQSVDLTAVAEMNLFLPRDYSAVRARVTEAFTLRRLSAKIIGEIESITTLTAAIASGMGATVLPESAARSLCGAANGWMARISTPSMSLSLSLNMSARGSLSPQAQAVKEILLSLVSRPSLENRELQLVS.

The HTH lysR-type domain maps to 1-58 (MNLRRLKYFVKIVDIGSLTQAAEVLHIAQPALSQQVATLEGEMDQQLLIRTKRGVTPT). The H-T-H motif DNA-binding region spans 18-37 (LTQAAEVLHIAQPALSQQVA).

It belongs to the LysR transcriptional regulatory family.

Its function is as follows. Transcriptional activator for the hut, put and ure operons and repressor for the gdh and gltB operons in response to nitrogen limitation. Negative regulator of its own expression. This chain is Nitrogen assimilation regulatory protein nac (nac), found in Klebsiella aerogenes (Enterobacter aerogenes).